We begin with the raw amino-acid sequence, 356 residues long: NF-kappa-B inhibitor beta (356 aa).

S19 and S23 each carry phosphoserine; by RPS6KA1. ANK repeat units lie at residues 57–86, 93–122, and 126–155; these read DGDT…GTEY, LGQT…GLCV, and RGHT…RRPR. A disordered region spans residues 149 to 193; sequence PRPRRPREAPDTYLAQGPDRTPDTNHTPVALYPDSDLEKEEEESE. Phosphoserine is present on S183. Acidic residues predominate over residues 183–193; the sequence is SDLEKEEEESE. ANK repeat units lie at residues 206–235, 240–269, and 273–302; these read EGHT…DLDK, CGRS…NPAA, and GGRT…PEPE. Residues 298–356 are disordered; that stretch reads APEPEGEDEKSGPCSSSSDSDSGDEGDEYDDIVVHSSRSQTRLPPTPASKPLPDDPRPV. Residues S313 and S315 each carry the phosphoserine; by CK2 modification. Residues 318 to 328 are compositionally biased toward acidic residues; that stretch reads DSGDEGDEYDD.

It belongs to the NF-kappa-B inhibitor family. Interacts with THRB (via ligand-binding domain). Interacts with RELA and REL. Interacts with COMMD1. Interacts with inhibitor kappa B-interacting Ras-like NKIRAS1 and NKIRAS2. In terms of processing, phosphorylated by RPS6KA1; followed by degradation. Interaction with NKIRAS1 and NKIRAS2 probably prevents phosphorylation. As to expression, expressed in all tissues examined.

Its subcellular location is the cytoplasm. The protein localises to the nucleus. Functionally, inhibits NF-kappa-B by complexing with and trapping it in the cytoplasm. However, the unphosphorylated form resynthesized after cell stimulation is able to bind NF-kappa-B allowing its transport to the nucleus and protecting it to further NFKBIA-dependent inactivation. Association with inhibitor kappa B-interacting NKIRAS1 and NKIRAS2 prevent its phosphorylation rendering it more resistant to degradation, explaining its slower degradation. In Homo sapiens (Human), this protein is NF-kappa-B inhibitor beta (NFKBIB).